The following is a 93-amino-acid chain: Small ribosomal subunit protein bS20 (93 aa).

Positions 1 to 11 are enriched in basic and acidic residues; it reads MPQHKSAEKRV. A disordered region spans residues 1–23; it reads MPQHKSAEKRVRQSKRRNARNRV. Residues 12 to 23 are compositionally biased toward basic residues; it reads RQSKRRNARNRV.

The protein belongs to the bacterial ribosomal protein bS20 family.

Binds directly to 16S ribosomal RNA. In Chloroherpeton thalassium (strain ATCC 35110 / GB-78), this protein is Small ribosomal subunit protein bS20.